The primary structure comprises 519 residues: ATP synthase subunit alpha 2 (519 aa).

ATP is bound at residue 179 to 186 (GDRQTGKT).

This sequence belongs to the ATPase alpha/beta chains family. In terms of assembly, F-type ATPases have 2 components, CF(1) - the catalytic core - and CF(0) - the membrane proton channel. CF(1) has five subunits: alpha(3), beta(3), gamma(1), delta(1), epsilon(1). CF(0) has three main subunits: a(1), b(2) and c(9-12). The alpha and beta chains form an alternating ring which encloses part of the gamma chain. CF(1) is attached to CF(0) by a central stalk formed by the gamma and epsilon chains, while a peripheral stalk is formed by the delta and b chains.

The protein resides in the cell inner membrane. The enzyme catalyses ATP + H2O + 4 H(+)(in) = ADP + phosphate + 5 H(+)(out). In terms of biological role, produces ATP from ADP in the presence of a proton gradient across the membrane. The alpha chain is a regulatory subunit. This chain is ATP synthase subunit alpha 2, found in Syntrophus aciditrophicus (strain SB).